The sequence spans 371 residues: Macrolide export protein MacA (371 aa).

At 1–10 the chain is on the cytoplasmic side; the sequence is MKKRKTVKKR. Residues 11–31 traverse the membrane as a helical segment; it reads YVIALVIVIAGLITLWRILNA. The Periplasmic portion of the chain corresponds to 32–371; that stretch reads PVPTYQTLIV…IGEAKPGAAQ (340 aa). A coiled-coil region spans residues 92-137; sequence IDPEQAENQIKEVEATLMELRAQRQQAEAELKLARVTYSRQQRLAQ.

Belongs to the membrane fusion protein (MFP) (TC 8.A.1) family. Homohexamer. Part of the tripartite efflux system MacAB-TolC, which is composed of an inner membrane transporter, MacB, a periplasmic membrane fusion protein, MacA, and an outer membrane component, TolC. The complex forms a large protein conduit and can translocate molecules across both the inner and outer membranes. MacA interacts with MacB and TolC.

The protein resides in the cell inner membrane. Functionally, part of the tripartite efflux system MacAB-TolC. MacA stimulates the ATPase activity of MacB by promoting the closed ATP-bound state of MacB, increases the capacity of MacB to bind macrolides such as erythromycin, and provides a physical link between MacB and TolC. Confers resistance against macrolides. The chain is Macrolide export protein MacA (macA) from Escherichia coli O157:H7.